We begin with the raw amino-acid sequence, 190 residues long: Nucleoside triphosphate pyrophosphatase (190 aa).

The active-site Proton acceptor is Asp-69.

Belongs to the Maf family. A divalent metal cation is required as a cofactor.

The protein resides in the cytoplasm. The catalysed reaction is a ribonucleoside 5'-triphosphate + H2O = a ribonucleoside 5'-phosphate + diphosphate + H(+). It catalyses the reaction a 2'-deoxyribonucleoside 5'-triphosphate + H2O = a 2'-deoxyribonucleoside 5'-phosphate + diphosphate + H(+). Its function is as follows. Nucleoside triphosphate pyrophosphatase. May have a dual role in cell division arrest and in preventing the incorporation of modified nucleotides into cellular nucleic acids. This chain is Nucleoside triphosphate pyrophosphatase, found in Helicobacter pylori (strain G27).